The sequence spans 224 residues: Imidazoleglycerol-phosphate dehydratase (224 aa).

Belongs to the imidazoleglycerol-phosphate dehydratase family.

It catalyses the reaction D-erythro-1-(imidazol-4-yl)glycerol 3-phosphate = 3-(imidazol-4-yl)-2-oxopropyl phosphate + H2O. It participates in amino-acid biosynthesis; L-histidine biosynthesis; L-histidine from 5-phospho-alpha-D-ribose 1-diphosphate: step 6/9. This chain is Imidazoleglycerol-phosphate dehydratase (HIS3), found in Komagataella pastoris (Yeast).